The primary structure comprises 449 residues: Na(+)/H(+) antiporter NhaA 1 (449 aa).

Helical transmembrane passes span 38–58 (GILL…PWAA), 79–99 (FTIR…VVGM), 117–137 (VLPL…YAAF), 145–165 (AGWA…LTLV), 175–195 (VFLT…IALF), 198–218 (SGLH…LACL), 240–260 (MHHG…FMPA), 311–331 (FVHL…ALAN), 347–367 (PLPL…IFLF), 390–410 (GVAV…GLAF), and 422–442 (LGIL…LRFV).

This sequence belongs to the NhaA Na(+)/H(+) (TC 2.A.33) antiporter family.

The protein localises to the cell inner membrane. It carries out the reaction Na(+)(in) + 2 H(+)(out) = Na(+)(out) + 2 H(+)(in). Functionally, na(+)/H(+) antiporter that extrudes sodium in exchange for external protons. The polypeptide is Na(+)/H(+) antiporter NhaA 1 (Myxococcus xanthus (strain DK1622)).